The following is a 285-amino-acid chain: HTH-type transcriptional regulator MurR (285 aa).

Positions 1 to 77 (MLYLTKISNA…MALIGEYSAS (77 aa)) constitute an HTH rpiR-type domain. The H-T-H motif DNA-binding region spans 37–56 (SRQMAKQLGISQSSIVKFAQ). An SIS domain is found at 128 to 268 (IIEVISKAPF…FVGLVQLNDV (141 aa)).

As to quaternary structure, homotetramer.

Its pathway is amino-sugar metabolism; N-acetylmuramate degradation [regulation]. Its function is as follows. Represses the expression of the murPQ operon involved in the uptake and degradation of N-acetylmuramic acid (MurNAc). Binds to two adjacent inverted repeats within the operator region. MurNAc 6-phosphate, the substrate of MurQ, is the specific inducer that weakens binding of MurR to the operator. The sequence is that of HTH-type transcriptional regulator MurR from Escherichia coli (strain K12 / MC4100 / BW2952).